A 187-amino-acid chain; its full sequence is Ubiquinone biosynthesis protein COQ4 homolog, mitochondrial (187 aa).

Zn(2+) contacts are provided by histidine 77, aspartate 78, histidine 81, and glutamate 93.

The protein belongs to the COQ4 family. As to quaternary structure, component of a multi-subunit COQ enzyme complex. The cofactor is Zn(2+).

The protein localises to the mitochondrion inner membrane. The enzyme catalyses a 4-hydroxy-3-methoxy-5-(all-trans-polyprenyl)benzoate + H(+) = a 2-methoxy-6-(all-trans-polyprenyl)phenol + CO2. It participates in cofactor biosynthesis; ubiquinone biosynthesis. Functionally, lyase that catalyzes the C1-decarboxylation of 4-hydroxy-3-methoxy-5-(all-trans-polyprenyl)benzoic acid into 2-methoxy-6-(all-trans-polyprenyl)phenol during ubiquinone biosynthesis. The chain is Ubiquinone biosynthesis protein COQ4 homolog, mitochondrial from Leishmania braziliensis.